The chain runs to 169 residues: Putative 3-methyladenine DNA glycosylase (169 aa).

The protein belongs to the DNA glycosylase MPG family.

This Wolbachia sp. subsp. Brugia malayi (strain TRS) protein is Putative 3-methyladenine DNA glycosylase.